A 205-amino-acid polypeptide reads, in one-letter code: COP9 signalosome complex subunit 7 (205 aa).

The region spanning 1-135 (MEEKISQAID…QTLHVSWALE (135 aa)) is the PCI domain. Ser183 is subject to Phosphoserine.

This sequence belongs to the CSN7/EIF3M family. CSN7 subfamily. As to quaternary structure, component of the COP9 signalosome (CSN) complex.

In terms of biological role, component of the COP9 signalosome (CSN) complex that acts as an regulator of the ubiquitin (Ubl) conjugation pathway by mediating the deneddylation of the cullin subunit of SCF-type E3 ubiquitin-protein ligase complexes. The polypeptide is COP9 signalosome complex subunit 7 (csn71) (Schizosaccharomyces pombe (strain 972 / ATCC 24843) (Fission yeast)).